A 246-amino-acid chain; its full sequence is Polyhedrin (246 aa).

Belongs to the polyhedrin family.

Major component of the virus occlusion bodies, which are large proteinaceous structures (polyhedra), that protect the virus from the outside environment for extended periods until they are ingested by insect larvae. This Heliothis zea nuclear polyhedrosis virus (HzSNPV) protein is Polyhedrin (PH).